We begin with the raw amino-acid sequence, 397 residues long: 3-ketoacyl-CoA thiolase, mitochondrial (397 aa).

The N-terminal 16 residues, 1–16 (MALLRGVFVVAAKRTP), are a transit peptide targeting the mitochondrion; not cleaved. Lys25 bears the N6-acetyllysine; alternate mark. At Lys25 the chain carries N6-succinyllysine; alternate. Lys45 is modified (N6-succinyllysine). Cys92 acts as the Acyl-thioester intermediate in catalysis. Position 119 is a phosphothreonine (Thr119). Ser121 is subject to Phosphoserine. Residue Tyr127 is modified to Phosphotyrosine. Position 136 is a phosphothreonine (Thr136). Residue Lys137 is modified to N6-acetyllysine; alternate. Lys137 carries the N6-succinyllysine; alternate modification. Ser140 carries the phosphoserine modification. N6-acetyllysine; alternate occurs at positions 143, 171, 191, and 209. An N6-succinyllysine; alternate mark is found at Lys143, Lys171, Lys191, and Lys209. Residues Lys211, Lys212, and Lys214 each carry the N6-succinyllysine modification. 2 residues coordinate CoA: Arg224 and Thr227. N6-acetyllysine; alternate is present on Lys234. Lys234 is subject to N6-succinyllysine; alternate. An N6-succinyllysine modification is found at Lys240. Position 241 is an N6-acetyllysine (Lys241). Ser251 provides a ligand contact to CoA. An N6-acetyllysine mark is found at Lys269 and Lys270. Lys305 carries the N6-acetyllysine; alternate modification. The residue at position 305 (Lys305) is an N6-succinyllysine; alternate. Phosphoserine is present on Ser310. Lys312 carries the N6-acetyllysine; alternate modification. Lys312 carries the N6-succinyllysine; alternate modification. Residue Ser333 is modified to Phosphoserine. Residues Lys340 and Lys375 each carry the N6-acetyllysine modification. Cys382 serves as the catalytic Proton donor/acceptor.

Belongs to the thiolase-like superfamily. Thiolase family. As to quaternary structure, homotetramer. Interacts with BNIP3.

Its subcellular location is the mitochondrion. The enzyme catalyses an acyl-CoA + acetyl-CoA = a 3-oxoacyl-CoA + CoA. The catalysed reaction is 2 acetyl-CoA = acetoacetyl-CoA + CoA. It carries out the reaction acetyl-CoA + H2O = acetate + CoA + H(+). It catalyses the reaction propanoyl-CoA + H2O = propanoate + CoA + H(+). The enzyme catalyses butanoyl-CoA + H2O = butanoate + CoA + H(+). The catalysed reaction is hexanoyl-CoA + H2O = hexanoate + CoA + H(+). It carries out the reaction octanoyl-CoA + H2O = octanoate + CoA + H(+). It catalyses the reaction decanoyl-CoA + H2O = decanoate + CoA + H(+). The enzyme catalyses dodecanoyl-CoA + H2O = dodecanoate + CoA + H(+). The catalysed reaction is tetradecanoyl-CoA + H2O = tetradecanoate + CoA + H(+). It carries out the reaction hexadecanoyl-CoA + H2O = hexadecanoate + CoA + H(+). The protein operates within lipid metabolism; fatty acid beta-oxidation. Functionally, in the production of energy from fats, this is one of the enzymes that catalyzes the last step of the mitochondrial beta-oxidation pathway, an aerobic process breaking down fatty acids into acetyl-CoA. Using free coenzyme A/CoA, catalyzes the thiolytic cleavage of medium- to long-chain unbranched 3-oxoacyl-CoAs into acetyl-CoA and a fatty acyl-CoA shortened by two carbon atoms. Also catalyzes the condensation of two acetyl-CoA molecules into acetoacetyl-CoA and could be involved in the production of ketone bodies. Also displays hydrolase activity on various fatty acyl-CoAs. Thereby, could be responsible for the production of acetate in a side reaction to beta-oxidation. Abolishes BNIP3-mediated apoptosis and mitochondrial damage. This chain is 3-ketoacyl-CoA thiolase, mitochondrial (ACAA2), found in Pongo abelii (Sumatran orangutan).